A 243-amino-acid polypeptide reads, in one-letter code: Carboxy-S-adenosyl-L-methionine synthase (243 aa).

S-adenosyl-L-methionine contacts are provided by residues Tyr35, 68–70 (GCS), 92–93 (DN), and Arg199.

Belongs to the class I-like SAM-binding methyltransferase superfamily. Cx-SAM synthase family. In terms of assembly, homodimer.

It carries out the reaction prephenate + S-adenosyl-L-methionine = carboxy-S-adenosyl-L-methionine + 3-phenylpyruvate + H2O. In terms of biological role, catalyzes the conversion of S-adenosyl-L-methionine (SAM) to carboxy-S-adenosyl-L-methionine (Cx-SAM). This is Carboxy-S-adenosyl-L-methionine synthase from Helicobacter pylori (strain J99 / ATCC 700824) (Campylobacter pylori J99).